We begin with the raw amino-acid sequence, 319 residues long: Phosphate acyltransferase (319 aa).

The protein belongs to the PlsX family. Homodimer. Probably interacts with PlsY.

It is found in the cytoplasm. It carries out the reaction a fatty acyl-[ACP] + phosphate = an acyl phosphate + holo-[ACP]. The protein operates within lipid metabolism; phospholipid metabolism. In terms of biological role, catalyzes the reversible formation of acyl-phosphate (acyl-PO(4)) from acyl-[acyl-carrier-protein] (acyl-ACP). This enzyme utilizes acyl-ACP as fatty acyl donor, but not acyl-CoA. The polypeptide is Phosphate acyltransferase (Chlamydia muridarum (strain MoPn / Nigg)).